The chain runs to 353 residues: uncharacterized protein (353 aa).

Residues 1 to 30 (MHLRHLFSSRLRGSLLLGSLLVVSSFSTQA) form the signal peptide.

As to quaternary structure, monomer.

This is an uncharacterized protein from Escherichia coli (strain K12).